We begin with the raw amino-acid sequence, 1242 residues long: Phosphorylase b kinase regulatory subunit alpha, skeletal muscle isoform (1242 aa).

Phosphoserine occurs at positions 630, 731, 737, 740, 760, 813, 974, 983, and 987. Residues 812 to 842 are calmodulin-binding; that stretch reads LSELYVKVGEIRHWGLIRYISGILRKKVEAL. Position 1009 is a phosphoserine; by autocatalysis (S1009). A Phosphoserine; by PKA modification is found at S1020. Phosphoserine occurs at positions 1022 and 1025. The segment at 1065-1105 is calmodulin-binding; the sequence is SKDSRQGQWQRRRRLDGALNRVPIGFYQKVWKILQKCHGLS. S1132 is subject to Phosphoserine. The S-farnesyl cysteine moiety is linked to residue C1239.

Belongs to the phosphorylase b kinase regulatory chain family. As to quaternary structure, hexadecamer of 4 heterotetramers, each composed of alpha, beta, gamma, and delta subunits. Alpha (PHKA1 or PHKA2) and beta (PHKB) are regulatory subunits, gamma (PHKG1 or PHKG2) is the catalytic subunit, and delta is calmodulin. In terms of processing, although the final Cys may be farnesylated, the terminal tripeptide is probably not removed, and the C-terminus is not methylated.

The protein resides in the cell membrane. Its pathway is glycan biosynthesis; glycogen metabolism. By phosphorylation of various serine residues and by calcium. In terms of biological role, phosphorylase b kinase catalyzes the phosphorylation of serine in certain substrates, including troponin I. The alpha chain may bind calmodulin. This chain is Phosphorylase b kinase regulatory subunit alpha, skeletal muscle isoform (Phka1), found in Rattus norvegicus (Rat).